The following is a 586-amino-acid chain: Clathrin heavy chain linker domain-containing protein 1 (586 aa).

The stretch at 174 to 232 (MNLDALTKYMKHLEDKYAEIKQAMLIKYVPAQRKADLDEEMIVLLKRRDVAENLNKKLQ) forms a coiled coil.

The chain is Clathrin heavy chain linker domain-containing protein 1 (CLHC1) from Homo sapiens (Human).